A 66-amino-acid chain; its full sequence is Large ribosomal subunit protein bL33c (66 aa).

Belongs to the bacterial ribosomal protein bL33 family.

It is found in the plastid. It localises to the chloroplast. The polypeptide is Large ribosomal subunit protein bL33c (Oenothera argillicola (Appalachian evening primrose)).